Consider the following 402-residue polypeptide: MQYDHILVRYGELTLKSGNRNTFINQLKSNIKYALIPLTGYKVNANRDRMYVEITEDADAEEIMKRISKVFGVHSVSPVVKVEKNIDQIKSSAVKLARDIDAPGVTFKVDAKRSDKGFPYDTFALQQELGGEILSNIEHLTVDVKNPDYKLLVEIRSDAAYLYSRVIKGAGGLPVGTGGKTLLMLSGGIDSPVAGIEVMKRGVTIEAIHFHSPPFTSEEAKQKVIDLTRIMAETTGEIKLHLVPFTDIQKMIHKKVPENLTMTSTRRMMLKIADRFARQIDAKALVNGENLGQVASQTLGSMYAINAVTNLPILRPLLTLDKDEIIIKAKEIGTFDTSIQPFEDCCTIFTPKNPKTNPRLDKVESFEAGTDFDAMIEEAVANIETLTISKHTNTKKEFEDLL.

The region spanning 61-166 is the THUMP domain; that stretch reads EEIMKRISKV…SDAAYLYSRV (106 aa). Residues 184-185, 209-210, Arg-266, Gly-288, and Gln-297 contribute to the ATP site; these read ML and HF.

This sequence belongs to the ThiI family.

It is found in the cytoplasm. It carries out the reaction [ThiI sulfur-carrier protein]-S-sulfanyl-L-cysteine + a uridine in tRNA + 2 reduced [2Fe-2S]-[ferredoxin] + ATP + H(+) = [ThiI sulfur-carrier protein]-L-cysteine + a 4-thiouridine in tRNA + 2 oxidized [2Fe-2S]-[ferredoxin] + AMP + diphosphate. The catalysed reaction is [ThiS sulfur-carrier protein]-C-terminal Gly-Gly-AMP + S-sulfanyl-L-cysteinyl-[cysteine desulfurase] + AH2 = [ThiS sulfur-carrier protein]-C-terminal-Gly-aminoethanethioate + L-cysteinyl-[cysteine desulfurase] + A + AMP + 2 H(+). It functions in the pathway cofactor biosynthesis; thiamine diphosphate biosynthesis. In terms of biological role, catalyzes the ATP-dependent transfer of a sulfur to tRNA to produce 4-thiouridine in position 8 of tRNAs, which functions as a near-UV photosensor. Also catalyzes the transfer of sulfur to the sulfur carrier protein ThiS, forming ThiS-thiocarboxylate. This is a step in the synthesis of thiazole, in the thiamine biosynthesis pathway. The sulfur is donated as persulfide by IscS. The sequence is that of Probable tRNA sulfurtransferase from Macrococcus caseolyticus (strain JCSC5402) (Macrococcoides caseolyticum).